Reading from the N-terminus, the 460-residue chain is 3-isopropylmalate dehydratase large subunit (460 aa).

Residues Cys338, Cys398, and Cys401 each coordinate [4Fe-4S] cluster.

This sequence belongs to the aconitase/IPM isomerase family. LeuC type 1 subfamily. As to quaternary structure, heterodimer of LeuC and LeuD. The cofactor is [4Fe-4S] cluster.

It carries out the reaction (2R,3S)-3-isopropylmalate = (2S)-2-isopropylmalate. It participates in amino-acid biosynthesis; L-leucine biosynthesis; L-leucine from 3-methyl-2-oxobutanoate: step 2/4. Its function is as follows. Catalyzes the isomerization between 2-isopropylmalate and 3-isopropylmalate, via the formation of 2-isopropylmaleate. The polypeptide is 3-isopropylmalate dehydratase large subunit (Streptococcus sanguinis (strain SK36)).